The sequence spans 1825 residues: Serine protease/ABC transporter B family protein tagD (1825 aa).

Residues 1–26 (MKSNTNIRVLLVSGLILIFIFLGIKF) form the signal peptide. The Peptidase S8 domain maps to 307–727 (PKAIFGTKDT…NAVFDTFAGA (421 aa)). Active-site charge relay system residues include D338 and H384. N629 carries an N-linked (GlcNAc...) asparagine glycan. Catalysis depends on S652, which acts as the Charge relay system. N-linked (GlcNAc...) asparagine glycosylation is found at N704, N781, N849, and N896. The chain crosses the membrane as a helical span at residues 971–991 (YIVIIVAGGTMSLIITVLILI). An N-linked (GlcNAc...) asparagine glycan is attached at N1018. 4 consecutive transmembrane segments (helical) span residues 1071 to 1091 (FIIE…ASIL), 1116 to 1136 (FIII…SSWI), 1189 to 1209 (GILL…VFIF), and 1210 to 1230 (TISW…AIVT). The ABC transmembrane type-1 domain occupies 1075–1358 (ITISTACSLV…LFGVYSSYVQ (284 aa)). Residue N1295 is glycosylated (N-linked (GlcNAc...) asparagine). 2 consecutive transmembrane segments (helical) span residues 1304 to 1324 (WLMV…LAIQ) and 1327 to 1347 (FTVG…DSST). The segment at 1386–1529 (DNIIDTNQDN…NDDPNDNNGI (144 aa)) is disordered. The span at 1388–1402 (IIDTNQDNNNNNNND) shows a compositional bias: low complexity. Residues 1403 to 1415 (DISDSSSDDDDDN) are compositionally biased toward acidic residues. N-linked (GlcNAc...) asparagine glycosylation is present at N1424. Residues 1465–1494 (GEGIDNNNNNNNDNNINDDNNQQDPNNNNN) show a composition bias toward low complexity. A compositionally biased stretch (acidic residues) spans 1495–1514 (EIDDDGDDDGDDDDEGEDEN). The span at 1515 to 1529 (NNNNNNDDPNDNNGI) shows a compositional bias: low complexity. An ABC transporter domain is found at 1576–1813 (IEFKNVSFCY…KGKYYRMFAF (238 aa)). N-linked (GlcNAc...) asparagine glycosylation is present at N1580. 1611-1618 (GPSGSGKS) serves as a coordination point for ATP. N-linked (GlcNAc...) asparagine glycans are attached at residues N1715 and N1755.

This sequence in the C-terminal section; belongs to the ABC transporter superfamily. ABCB family. Multidrug resistance exporter (TC 3.A.1.201) subfamily. In the N-terminal section; belongs to the peptidase S8 family.

It is found in the membrane. This Dictyostelium discoideum (Social amoeba) protein is Serine protease/ABC transporter B family protein tagD (tagD).